Here is a 601-residue protein sequence, read N- to C-terminus: RNA polymerase II C-terminal domain phosphatase-like 5 (601 aa).

The tract at residues 1–20 is disordered; sequence MFVAKNLSPERESKRQKKEP. Residues 8–20 show a composition bias toward basic and acidic residues; sequence SPERESKRQKKEP. 2 FCP1 homology domains span residues 84–259 and 381–553; these read LNMK…TDES and LNEK…DESE.

In terms of tissue distribution, expressed in roots, seedlings, hypocotyls, cotyledons, leaves, siliques and flowers.

The protein resides in the nucleus. The enzyme catalyses O-phospho-L-seryl-[protein] + H2O = L-seryl-[protein] + phosphate. It carries out the reaction O-phospho-L-threonyl-[protein] + H2O = L-threonyl-[protein] + phosphate. Functionally, mediates the dephosphorylation of 'Ser-2' of the heptad repeats YSPTSPS in the C-terminal domain of the largest RNA polymerase II subunit (RPB1). This promotes the activity of RNA polymerase II. Positively regulates abscisic acid (ABA) and drought responses, including the regulation of specific genes expression. The chain is RNA polymerase II C-terminal domain phosphatase-like 5 from Arabidopsis thaliana (Mouse-ear cress).